The chain runs to 301 residues: Structure-specific endonuclease subunit SLX1 (301 aa).

One can recognise a GIY-YIG domain in the interval 12-95; the sequence is AFYCCYLLRS…QHPYQTRFIK (84 aa). An SLX1-type zinc finger spans residues 216 to 283; the sequence is CAICEKIVDY…IPTSGQCPNC (68 aa).

The protein belongs to the SLX1 family. Forms a heterodimer with SLX4. Requires a divalent metal cation as cofactor.

The protein localises to the nucleus. Catalytic subunit of the SLX1-SLX4 structure-specific endonuclease that resolves DNA secondary structures generated during DNA repair and recombination. Has endonuclease activity towards branched DNA substrates, introducing single-strand cuts in duplex DNA close to junctions with ss-DNA. This chain is Structure-specific endonuclease subunit SLX1, found in Eremothecium gossypii (strain ATCC 10895 / CBS 109.51 / FGSC 9923 / NRRL Y-1056) (Yeast).